Here is a 90-residue protein sequence, read N- to C-terminus: Probable Fe(2+)-trafficking protein (90 aa).

Belongs to the Fe(2+)-trafficking protein family.

Functionally, could be a mediator in iron transactions between iron acquisition and iron-requiring processes, such as synthesis and/or repair of Fe-S clusters in biosynthetic enzymes. This chain is Probable Fe(2+)-trafficking protein, found in Albidiferax ferrireducens (strain ATCC BAA-621 / DSM 15236 / T118) (Rhodoferax ferrireducens).